Here is a 273-residue protein sequence, read N- to C-terminus: Dermonecrotic toxin LapSicTox-alphaIB1bi (273 aa).

Histidine 5 is an active-site residue. Mg(2+) contacts are provided by glutamate 25 and aspartate 27. Histidine 41 functions as the Nucleophile in the catalytic mechanism. Intrachain disulfides connect cysteine 45-cysteine 51 and cysteine 47-cysteine 190. Aspartate 85 serves as a coordination point for Mg(2+). Asparagine 189 and asparagine 250 each carry an N-linked (GlcNAc...) asparagine glycan.

The protein belongs to the arthropod phospholipase D family. Class II subfamily. Requires Mg(2+) as cofactor. Expressed by the venom gland.

It localises to the secreted. It catalyses the reaction an N-(acyl)-sphingosylphosphocholine = an N-(acyl)-sphingosyl-1,3-cyclic phosphate + choline. The catalysed reaction is an N-(acyl)-sphingosylphosphoethanolamine = an N-(acyl)-sphingosyl-1,3-cyclic phosphate + ethanolamine. The enzyme catalyses a 1-acyl-sn-glycero-3-phosphocholine = a 1-acyl-sn-glycero-2,3-cyclic phosphate + choline. It carries out the reaction a 1-acyl-sn-glycero-3-phosphoethanolamine = a 1-acyl-sn-glycero-2,3-cyclic phosphate + ethanolamine. In terms of biological role, dermonecrotic toxins cleave the phosphodiester linkage between the phosphate and headgroup of certain phospholipids (sphingolipid and lysolipid substrates), forming an alcohol (often choline) and a cyclic phosphate. This toxin acts on sphingomyelin (SM). It may also act on ceramide phosphoethanolamine (CPE), lysophosphatidylcholine (LPC) and lysophosphatidylethanolamine (LPE), but not on lysophosphatidylserine (LPS), and lysophosphatidylglycerol (LPG). It acts by transphosphatidylation, releasing exclusively cyclic phosphate products as second products. Induces dermonecrosis, hemolysis, increased vascular permeability, edema, inflammatory response, and platelet aggregation. This Loxosceles apachea (Apache recluse spider) protein is Dermonecrotic toxin LapSicTox-alphaIB1bi.